The chain runs to 736 residues: Phosphoribosylformylglycinamidine synthase subunit PurL (736 aa).

The active site involves histidine 49. ATP-binding residues include tyrosine 52 and lysine 91. Mg(2+) is bound at residue glutamate 93. Substrate contacts are provided by residues 94–97 (SHNH) and arginine 116. Residue histidine 95 is the Proton acceptor of the active site. Aspartate 117 is a binding site for Mg(2+). Glutamine 240 contacts substrate. Residue aspartate 268 participates in Mg(2+) binding. 312–314 (ESQ) is a substrate binding site. ATP-binding residues include aspartate 493 and glycine 530. Residue asparagine 531 coordinates Mg(2+). Residue serine 533 participates in substrate binding.

This sequence belongs to the FGAMS family. Monomer. Part of the FGAM synthase complex composed of 1 PurL, 1 PurQ and 2 PurS subunits.

The protein localises to the cytoplasm. The enzyme catalyses N(2)-formyl-N(1)-(5-phospho-beta-D-ribosyl)glycinamide + L-glutamine + ATP + H2O = 2-formamido-N(1)-(5-O-phospho-beta-D-ribosyl)acetamidine + L-glutamate + ADP + phosphate + H(+). It functions in the pathway purine metabolism; IMP biosynthesis via de novo pathway; 5-amino-1-(5-phospho-D-ribosyl)imidazole from N(2)-formyl-N(1)-(5-phospho-D-ribosyl)glycinamide: step 1/2. Its function is as follows. Part of the phosphoribosylformylglycinamidine synthase complex involved in the purines biosynthetic pathway. Catalyzes the ATP-dependent conversion of formylglycinamide ribonucleotide (FGAR) and glutamine to yield formylglycinamidine ribonucleotide (FGAM) and glutamate. The FGAM synthase complex is composed of three subunits. PurQ produces an ammonia molecule by converting glutamine to glutamate. PurL transfers the ammonia molecule to FGAR to form FGAM in an ATP-dependent manner. PurS interacts with PurQ and PurL and is thought to assist in the transfer of the ammonia molecule from PurQ to PurL. The polypeptide is Phosphoribosylformylglycinamidine synthase subunit PurL (Rhodopseudomonas palustris (strain ATCC BAA-98 / CGA009)).